The following is a 118-amino-acid chain: MPRTKGGTVTRARRKKIMKLAKGYRGSKHLQFKAASTQVFVSRKYAFRDRKKRKSEFRKLWIARINAAARQNGLSYSKLMHGLKVAGIDMNRKMLADIAYNDEKTFADLADAAKKALN.

Belongs to the bacterial ribosomal protein bL20 family.

In terms of biological role, binds directly to 23S ribosomal RNA and is necessary for the in vitro assembly process of the 50S ribosomal subunit. It is not involved in the protein synthesizing functions of that subunit. The sequence is that of Large ribosomal subunit protein bL20 from Lactobacillus johnsonii (strain CNCM I-12250 / La1 / NCC 533).